A 243-amino-acid chain; its full sequence is DNA repair protein RecO (243 aa).

Belongs to the RecO family.

In terms of biological role, involved in DNA repair and RecF pathway recombination. The protein is DNA repair protein RecO of Xylella fastidiosa (strain M12).